Reading from the N-terminus, the 609-residue chain is Dihydroxy-acid dehydratase (609 aa).

Asp-81 is a binding site for Mg(2+). Cys-122 provides a ligand contact to [2Fe-2S] cluster. 2 residues coordinate Mg(2+): Asp-123 and Lys-124. Position 124 is an N6-carboxylysine (Lys-124). Residue Cys-195 coordinates [2Fe-2S] cluster. Residue Glu-491 coordinates Mg(2+). The active-site Proton acceptor is the Ser-517.

Belongs to the IlvD/Edd family. In terms of assembly, homodimer. It depends on [2Fe-2S] cluster as a cofactor. The cofactor is Mg(2+).

The enzyme catalyses (2R)-2,3-dihydroxy-3-methylbutanoate = 3-methyl-2-oxobutanoate + H2O. It carries out the reaction (2R,3R)-2,3-dihydroxy-3-methylpentanoate = (S)-3-methyl-2-oxopentanoate + H2O. Its pathway is amino-acid biosynthesis; L-isoleucine biosynthesis; L-isoleucine from 2-oxobutanoate: step 3/4. The protein operates within amino-acid biosynthesis; L-valine biosynthesis; L-valine from pyruvate: step 3/4. Functions in the biosynthesis of branched-chain amino acids. Catalyzes the dehydration of (2R,3R)-2,3-dihydroxy-3-methylpentanoate (2,3-dihydroxy-3-methylvalerate) into 2-oxo-3-methylpentanoate (2-oxo-3-methylvalerate) and of (2R)-2,3-dihydroxy-3-methylbutanoate (2,3-dihydroxyisovalerate) into 2-oxo-3-methylbutanoate (2-oxoisovalerate), the penultimate precursor to L-isoleucine and L-valine, respectively. In Acinetobacter baumannii (strain ACICU), this protein is Dihydroxy-acid dehydratase.